The primary structure comprises 211 residues: Urease accessory protein UreF (211 aa).

A disordered region spans residues 71 to 93 (DDADRETDARTPAPAARHASRSQ).

This sequence belongs to the UreF family. UreD, UreF and UreG form a complex that acts as a GTP-hydrolysis-dependent molecular chaperone, activating the urease apoprotein by helping to assemble the nickel containing metallocenter of UreC. The UreE protein probably delivers the nickel.

It is found in the cytoplasm. Functionally, required for maturation of urease via the functional incorporation of the urease nickel metallocenter. The chain is Urease accessory protein UreF from Mycobacterium bovis (strain ATCC BAA-935 / AF2122/97).